The following is a 237-amino-acid chain: Phosphoribosylaminoimidazole-succinocarboxamide synthase (237 aa).

This sequence belongs to the SAICAR synthetase family.

It catalyses the reaction 5-amino-1-(5-phospho-D-ribosyl)imidazole-4-carboxylate + L-aspartate + ATP = (2S)-2-[5-amino-1-(5-phospho-beta-D-ribosyl)imidazole-4-carboxamido]succinate + ADP + phosphate + 2 H(+). Its pathway is purine metabolism; IMP biosynthesis via de novo pathway; 5-amino-1-(5-phospho-D-ribosyl)imidazole-4-carboxamide from 5-amino-1-(5-phospho-D-ribosyl)imidazole-4-carboxylate: step 1/2. The polypeptide is Phosphoribosylaminoimidazole-succinocarboxamide synthase (Methanosarcina mazei (strain ATCC BAA-159 / DSM 3647 / Goe1 / Go1 / JCM 11833 / OCM 88) (Methanosarcina frisia)).